The following is a 371-amino-acid chain: Glutamate 5-kinase (371 aa).

Lys11 contributes to the ATP binding site. Substrate contacts are provided by Ser52, Asp139, and Asn151. Residues 171–172 (TD) and 213–219 (TGGMATK) contribute to the ATP site. In terms of domain architecture, PUA spans 278–356 (EGSLTLDEGA…AEIPRILGYE (79 aa)).

Belongs to the glutamate 5-kinase family.

The protein resides in the cytoplasm. The enzyme catalyses L-glutamate + ATP = L-glutamyl 5-phosphate + ADP. It participates in amino-acid biosynthesis; L-proline biosynthesis; L-glutamate 5-semialdehyde from L-glutamate: step 1/2. Functionally, catalyzes the transfer of a phosphate group to glutamate to form L-glutamate 5-phosphate. The polypeptide is Glutamate 5-kinase (Synechococcus sp. (strain JA-2-3B'a(2-13)) (Cyanobacteria bacterium Yellowstone B-Prime)).